The sequence spans 695 residues: Elongation factor G 1 (695 aa).

The tr-type G domain maps to Thr-6 to Lys-281. Residues Ala-15–Thr-22, Asp-79–His-83, and Asn-133–Asp-136 each bind GTP.

The protein belongs to the TRAFAC class translation factor GTPase superfamily. Classic translation factor GTPase family. EF-G/EF-2 subfamily.

It localises to the cytoplasm. Functionally, catalyzes the GTP-dependent ribosomal translocation step during translation elongation. During this step, the ribosome changes from the pre-translocational (PRE) to the post-translocational (POST) state as the newly formed A-site-bound peptidyl-tRNA and P-site-bound deacylated tRNA move to the P and E sites, respectively. Catalyzes the coordinated movement of the two tRNA molecules, the mRNA and conformational changes in the ribosome. This is Elongation factor G 1 (fusA) from Synechocystis sp. (strain ATCC 27184 / PCC 6803 / Kazusa).